The chain runs to 399 residues: Argininosuccinate synthase (399 aa).

An ATP-binding site is contributed by 8 to 16 (AYSGGLDTS). Tyrosine 87 is a binding site for L-citrulline. An ATP-binding site is contributed by glycine 117. The L-aspartate site is built by threonine 119, asparagine 123, and aspartate 124. Residue asparagine 123 participates in L-citrulline binding. Residues arginine 127, serine 175, glutamate 260, and tyrosine 272 each contribute to the L-citrulline site.

The protein belongs to the argininosuccinate synthase family. Type 1 subfamily. As to quaternary structure, homotetramer.

It localises to the cytoplasm. It catalyses the reaction L-citrulline + L-aspartate + ATP = 2-(N(omega)-L-arginino)succinate + AMP + diphosphate + H(+). Its pathway is amino-acid biosynthesis; L-arginine biosynthesis; L-arginine from L-ornithine and carbamoyl phosphate: step 2/3. This is Argininosuccinate synthase from Mycolicibacterium smegmatis (strain ATCC 700084 / mc(2)155) (Mycobacterium smegmatis).